The sequence spans 193 residues: Ion-translocating oxidoreductase complex subunit A (193 aa).

Helical transmembrane passes span 5 to 25 (LLIL…FLGL), 38 to 58 (AMGM…CSYL), 65 to 85 (APLG…AVVV), 102 to 122 (VLGI…VALL), 134 to 154 (ILYG…FSAM), and 171 to 191 (AIGM…TGLV).

The protein belongs to the NqrDE/RnfAE family. In terms of assembly, the complex is composed of six subunits: RnfA, RnfB, RnfC, RnfD, RnfE and RnfG.

It is found in the cell inner membrane. Its function is as follows. Part of a membrane-bound complex that couples electron transfer with translocation of ions across the membrane. The polypeptide is Ion-translocating oxidoreductase complex subunit A (Hahella chejuensis (strain KCTC 2396)).